The chain runs to 83 residues: Beta-toxin Ct25 (83 aa).

An N-terminal signal peptide occupies residues 1 to 18 (MKVLILIIASVLLIGVEC). In terms of domain architecture, LCN-type CS-alpha/beta spans 19–81 (KDGYPKNSEG…VWDSATNKCG (63 aa)). 4 disulfide bridges follow: C29–C80, C33–C54, C40–C61, and C44–C63. A Glycine amide modification is found at G81.

Belongs to the long (4 C-C) scorpion toxin superfamily. Sodium channel inhibitor family. Beta subfamily. In terms of tissue distribution, expressed by the venom gland.

Its subcellular location is the secreted. Beta toxins bind voltage-independently at site-4 of sodium channels (Nav) and shift the voltage of activation toward more negative potentials thereby affecting sodium channel activation and promoting spontaneous and repetitive firing. In Centruroides tecomanus (Scorpion), this protein is Beta-toxin Ct25.